The primary structure comprises 348 residues: MGKTDLSYTLADIAFRIGAELRGDGSVEVKGLATLQKAQAGQISFLANKNYLKHLKDTCASAVIIPSSFADQCSTNVLVMENSYFGYALCSQLFSPQWWSMSGISPSAAISESAKLGAGVTIGANVVIEEDAEIGEGAVIGPGCYIGAGSIIGAKTQLRPNVTVYHGVNIGARALIHSGAVIGSDGFGFAPNKGDWAKIAQLGGVVIGDDVEIGANTTIDRGALDDTVIETGAKLDNQIQIAHNVKVGAYTVIAACVGVSGSSSIGKHCMIGGGVGIAGHLEITDQVQITGMTLVTHNIKEPGVYSSGTAVEPNASWRKNVARFRQLDQLARRVRVLEQGGRRKSDAD.

Residue histidine 243 is the Proton acceptor of the active site.

This sequence belongs to the transferase hexapeptide repeat family. LpxD subfamily. Homotrimer.

It catalyses the reaction a UDP-3-O-[(3R)-3-hydroxyacyl]-alpha-D-glucosamine + a (3R)-hydroxyacyl-[ACP] = a UDP-2-N,3-O-bis[(3R)-3-hydroxyacyl]-alpha-D-glucosamine + holo-[ACP] + H(+). It participates in bacterial outer membrane biogenesis; LPS lipid A biosynthesis. Functionally, catalyzes the N-acylation of UDP-3-O-acylglucosamine using 3-hydroxyacyl-ACP as the acyl donor. Is involved in the biosynthesis of lipid A, a phosphorylated glycolipid that anchors the lipopolysaccharide to the outer membrane of the cell. The protein is UDP-3-O-acylglucosamine N-acyltransferase of Hahella chejuensis (strain KCTC 2396).